The chain runs to 222 residues: GTP cyclohydrolase 1 (222 aa).

Zn(2+)-binding residues include Cys111, His114, and Cys182.

This sequence belongs to the GTP cyclohydrolase I family. Toroid-shaped homodecamer, composed of two pentamers of five dimers.

It carries out the reaction GTP + H2O = 7,8-dihydroneopterin 3'-triphosphate + formate + H(+). It participates in cofactor biosynthesis; 7,8-dihydroneopterin triphosphate biosynthesis; 7,8-dihydroneopterin triphosphate from GTP: step 1/1. In Citrobacter koseri (strain ATCC BAA-895 / CDC 4225-83 / SGSC4696), this protein is GTP cyclohydrolase 1.